We begin with the raw amino-acid sequence, 433 residues long: Tyrosine--tRNA ligase (433 aa).

Tyr34 serves as a coordination point for L-tyrosine. Residues 39–48 carry the 'HIGH' region motif; the sequence is PTASSLHVGS. Tyr169 and Gln173 together coordinate L-tyrosine. The short motif at 229–233 is the 'KMSKS' region element; it reads KMGKT. Position 232 (Lys232) interacts with ATP. The S4 RNA-binding domain occupies 364–432; the sequence is IPAFVLFHTV…RYHTIVVRKG (69 aa).

Belongs to the class-I aminoacyl-tRNA synthetase family. TyrS type 1 subfamily. As to quaternary structure, homodimer.

It localises to the cytoplasm. It carries out the reaction tRNA(Tyr) + L-tyrosine + ATP = L-tyrosyl-tRNA(Tyr) + AMP + diphosphate + H(+). Its function is as follows. Catalyzes the attachment of tyrosine to tRNA(Tyr) in a two-step reaction: tyrosine is first activated by ATP to form Tyr-AMP and then transferred to the acceptor end of tRNA(Tyr). This is Tyrosine--tRNA ligase from Desulfosudis oleivorans (strain DSM 6200 / JCM 39069 / Hxd3) (Desulfococcus oleovorans).